Reading from the N-terminus, the 92-residue chain is C-C motif chemokine 4 (92 aa).

An N-terminal signal peptide occupies residues 1-23 (MKLCVTVLSLLVLMAAFCSPALS). 2 cysteine pairs are disulfide-bonded: Cys34-Cys58 and Cys35-Cys74.

Belongs to the intercrine beta (chemokine CC) family. As to quaternary structure, homodimer. Interacts with CCR5.

It is found in the secreted. In terms of biological role, monokine with inflammatory and chemokinetic properties. This Bos taurus (Bovine) protein is C-C motif chemokine 4 (CCL4).